A 430-amino-acid chain; its full sequence is Adenylosuccinate synthetase (430 aa).

GTP contacts are provided by residues 13-19 (GDEGKGK) and 41-43 (GHT). Asp14 (proton acceptor) is an active-site residue. Mg(2+) contacts are provided by Asp14 and Gly41. Residues 14 to 17 (DEGK), 39 to 42 (NAGH), Thr130, Arg144, Gln225, Thr240, and Arg304 contribute to the IMP site. His42 functions as the Proton donor in the catalytic mechanism. 300-306 (ATTGRKR) contacts substrate. GTP is bound by residues Arg306, 332-334 (KLD), and 414-416 (STG).

This sequence belongs to the adenylosuccinate synthetase family. As to quaternary structure, homodimer. Requires Mg(2+) as cofactor.

The protein localises to the cytoplasm. It catalyses the reaction IMP + L-aspartate + GTP = N(6)-(1,2-dicarboxyethyl)-AMP + GDP + phosphate + 2 H(+). Its pathway is purine metabolism; AMP biosynthesis via de novo pathway; AMP from IMP: step 1/2. Functionally, plays an important role in the de novo pathway of purine nucleotide biosynthesis. Catalyzes the first committed step in the biosynthesis of AMP from IMP. In Teredinibacter turnerae (strain ATCC 39867 / T7901), this protein is Adenylosuccinate synthetase.